The chain runs to 290 residues: MRIADYSVTRAVLDRHGFTFKKSFGQNFLTDTNILQKIVDTAEIDRSVNVIEIGPGIGALTEFLAENAAEVMAFEIDDRLIPILADTLRDFDNVQVINQDILKSDLQSQIKQFKNPDLPLKVVANLPYYITTPILMHLIESKIPFQEFVVMMQREVADRISAEPNTKAYGSLSIAVQYYMTAKVAFIVPKTVFVPAPNVDSAILKMVRRPEPLIEVTDEDFFFRVAKVGFIHRRKTLWNNLTSHFGKTEEIKTKLTQALELADIKPSIRGEALTIPQYGKLADALKEVGF.

Asparagine 27, leucine 29, glycine 54, glutamate 75, aspartate 100, and asparagine 125 together coordinate S-adenosyl-L-methionine.

Belongs to the class I-like SAM-binding methyltransferase superfamily. rRNA adenine N(6)-methyltransferase family. RsmA subfamily.

It localises to the cytoplasm. The catalysed reaction is adenosine(1518)/adenosine(1519) in 16S rRNA + 4 S-adenosyl-L-methionine = N(6)-dimethyladenosine(1518)/N(6)-dimethyladenosine(1519) in 16S rRNA + 4 S-adenosyl-L-homocysteine + 4 H(+). Functionally, specifically dimethylates two adjacent adenosines (A1518 and A1519) in the loop of a conserved hairpin near the 3'-end of 16S rRNA in the 30S particle. May play a critical role in biogenesis of 30S subunits. The protein is Ribosomal RNA small subunit methyltransferase A of Streptococcus uberis (strain ATCC BAA-854 / 0140J).